Here is a 77-residue protein sequence, read N- to C-terminus: Large ribosomal subunit protein bL28 (77 aa).

The protein belongs to the bacterial ribosomal protein bL28 family.

The polypeptide is Large ribosomal subunit protein bL28 (Karelsulcia muelleri (strain GWSS) (Sulcia muelleri)).